A 114-amino-acid polypeptide reads, in one-letter code: Large ribosomal subunit protein P2 (114 aa).

The span at 74–83 (AAAAGGGGGD) shows a compositional bias: gly residues. The segment at 74–114 (AAAAGGGGGDAPAAAAEEPKKEEKSEEESDEELGFSLFDDN) is disordered. The span at 98-114 (SEEESDEELGFSLFDDN) shows a compositional bias: acidic residues.

This sequence belongs to the eukaryotic ribosomal protein P1/P2 family. In terms of assembly, P1 and P2 exist as dimers at the large ribosomal subunit. Phosphorylated.

Functionally, plays an important role in the elongation step of protein synthesis. This is Large ribosomal subunit protein P2 from Parthenium argentatum (Guayule rubber plant).